Here is a 922-residue protein sequence, read N- to C-terminus: Protein translocase subunit SecA (922 aa).

Residues Q87, 105–109, and D516 each bind ATP; that span reads GEGKT. Positions 867–912 are disordered; the sequence is YTAPTETGEPETLPDPRTAGAGGDGLNLPEGVRIGRNDPCPCGSGK. Residues C906, C908, C917, and H918 each coordinate Zn(2+).

Belongs to the SecA family. As to quaternary structure, monomer and homodimer. Part of the essential Sec protein translocation apparatus which comprises SecA, SecYEG and auxiliary proteins SecDF-YajC and YidC. Zn(2+) is required as a cofactor.

It is found in the cell inner membrane. The protein resides in the cytoplasm. It catalyses the reaction ATP + H2O + cellular proteinSide 1 = ADP + phosphate + cellular proteinSide 2.. In terms of biological role, part of the Sec protein translocase complex. Interacts with the SecYEG preprotein conducting channel. Has a central role in coupling the hydrolysis of ATP to the transfer of proteins into and across the cell membrane, serving both as a receptor for the preprotein-SecB complex and as an ATP-driven molecular motor driving the stepwise translocation of polypeptide chains across the membrane. The protein is Protein translocase subunit SecA of Paracidovorax citrulli (strain AAC00-1) (Acidovorax citrulli).